Reading from the N-terminus, the 555-residue chain is Oxygen-dependent choline dehydrogenase (555 aa).

4–33 contacts FAD; it reads DYIIIGAGSAGNVLATRLTEDADVSVLLLE. The tract at residues 180–202 is disordered; it reads QQEGFGPMDRTVTPKGRRASTAR. The Proton acceptor role is filled by His-473.

The protein belongs to the GMC oxidoreductase family. Requires FAD as cofactor.

The enzyme catalyses choline + A = betaine aldehyde + AH2. The catalysed reaction is betaine aldehyde + NAD(+) + H2O = glycine betaine + NADH + 2 H(+). The protein operates within amine and polyamine biosynthesis; betaine biosynthesis via choline pathway; betaine aldehyde from choline (cytochrome c reductase route): step 1/1. In terms of biological role, involved in the biosynthesis of the osmoprotectant glycine betaine. Catalyzes the oxidation of choline to betaine aldehyde and betaine aldehyde to glycine betaine at the same rate. This chain is Oxygen-dependent choline dehydrogenase, found in Serratia proteamaculans (strain 568).